A 111-amino-acid polypeptide reads, in one-letter code: MISTVALFWGLCVVCIINMARYFSSLRALLVVLRGCDPLLYQYVDGGGFFTSHGQPNKQVRLVWYIYAQRYRDHHDEEFIRRCERVRRQFILTSALCGLVVISLIALLIWH.

2 consecutive transmembrane segments (helical) span residues 1 to 21 and 90 to 110; these read MIST…NMAR and FILT…LLIW.

The protein belongs to the universal stress protein B family.

It localises to the cell inner membrane. This chain is Universal stress protein B, found in Escherichia fergusonii (strain ATCC 35469 / DSM 13698 / CCUG 18766 / IAM 14443 / JCM 21226 / LMG 7866 / NBRC 102419 / NCTC 12128 / CDC 0568-73).